The chain runs to 470 residues: ATP synthase subunit beta (470 aa).

Position 148–155 (148–155) interacts with ATP; sequence GGAGVGKT.

Belongs to the ATPase alpha/beta chains family. F-type ATPases have 2 components, CF(1) - the catalytic core - and CF(0) - the membrane proton channel. CF(1) has five subunits: alpha(3), beta(3), gamma(1), delta(1), epsilon(1). CF(0) has three main subunits: a(1), b(2) and c(9-12). The alpha and beta chains form an alternating ring which encloses part of the gamma chain. CF(1) is attached to CF(0) by a central stalk formed by the gamma and epsilon chains, while a peripheral stalk is formed by the delta and b chains.

The protein resides in the cell inner membrane. It carries out the reaction ATP + H2O + 4 H(+)(in) = ADP + phosphate + 5 H(+)(out). Produces ATP from ADP in the presence of a proton gradient across the membrane. The catalytic sites are hosted primarily by the beta subunits. In Saccharophagus degradans (strain 2-40 / ATCC 43961 / DSM 17024), this protein is ATP synthase subunit beta.